The primary structure comprises 315 residues: Ribose-phosphate pyrophosphokinase (315 aa).

ATP-binding positions include aspartate 37–glutamate 39 and arginine 96–glutamine 97. Positions 131 and 170 each coordinate Mg(2+). Lysine 194 is an active-site residue. D-ribose 5-phosphate-binding positions include arginine 196, aspartate 220, and aspartate 224–threonine 228.

The protein belongs to the ribose-phosphate pyrophosphokinase family. Class I subfamily. In terms of assembly, homohexamer. Mg(2+) is required as a cofactor.

The protein localises to the cytoplasm. The enzyme catalyses D-ribose 5-phosphate + ATP = 5-phospho-alpha-D-ribose 1-diphosphate + AMP + H(+). Its pathway is metabolic intermediate biosynthesis; 5-phospho-alpha-D-ribose 1-diphosphate biosynthesis; 5-phospho-alpha-D-ribose 1-diphosphate from D-ribose 5-phosphate (route I): step 1/1. In terms of biological role, involved in the biosynthesis of the central metabolite phospho-alpha-D-ribosyl-1-pyrophosphate (PRPP) via the transfer of pyrophosphoryl group from ATP to 1-hydroxyl of ribose-5-phosphate (Rib-5-P). The protein is Ribose-phosphate pyrophosphokinase of Yersinia pestis.